Consider the following 488-residue polypeptide: N-succinylglutamate 5-semialdehyde dehydrogenase (488 aa).

An NAD(+)-binding site is contributed by 221-226 (GSSRTG). Catalysis depends on residues Glu-244 and Cys-278.

It belongs to the aldehyde dehydrogenase family. AstD subfamily.

It carries out the reaction N-succinyl-L-glutamate 5-semialdehyde + NAD(+) + H2O = N-succinyl-L-glutamate + NADH + 2 H(+). Its pathway is amino-acid degradation; L-arginine degradation via AST pathway; L-glutamate and succinate from L-arginine: step 4/5. Catalyzes the NAD-dependent reduction of succinylglutamate semialdehyde into succinylglutamate. This Pseudomonas fluorescens (strain Pf0-1) protein is N-succinylglutamate 5-semialdehyde dehydrogenase.